A 1277-amino-acid chain; its full sequence is DNA repair protein RAD5B (1277 aa).

Residues 271-293 form a disordered region; the sequence is KLEQENDDLFSSGDSDGTSAKRR. The region spanning 674–871 is the Helicase ATP-binding domain; sequence PTATQMARGG…YSLLCFLHVE (198 aa). 687-694 is a binding site for ATP; the sequence is DAMGLGKT. The DEAH box signature appears at 822 to 825; it reads DEAH. Residues 1040 to 1080 form an RING-type zinc finger; that stretch reads CPICLESADDPVLTPCAHRMCRECLLTSWRSPSCGLCPICR. The region spanning 1113 to 1277 is the Helicase C-terminal domain; the sequence is ELLKCLEKIK…RLEELKMLFR (165 aa).

Belongs to the SNF2/RAD54 helicase family. RAD16 subfamily.

Its subcellular location is the nucleus. Its function is as follows. Possesses intrinsic ATP-dependent nucleosome-remodeling activity. This activity may be required for DNA repair. Does not seem to be required for DNA repair and regulation of homologous recombination (HR). The chain is DNA repair protein RAD5B from Arabidopsis thaliana (Mouse-ear cress).